The primary structure comprises 163 residues: Protein-export protein SecB (163 aa).

Belongs to the SecB family. As to quaternary structure, homotetramer, a dimer of dimers. One homotetramer interacts with 1 SecA dimer.

The protein localises to the cytoplasm. Its function is as follows. One of the proteins required for the normal export of preproteins out of the cell cytoplasm. It is a molecular chaperone that binds to a subset of precursor proteins, maintaining them in a translocation-competent state. It also specifically binds to its receptor SecA. The sequence is that of Protein-export protein SecB from Shewanella woodyi (strain ATCC 51908 / MS32).